The primary structure comprises 257 residues: Cyclin-C1-1 (257 aa).

This sequence belongs to the cyclin family. Cyclin C subfamily.

In Oryza sativa subsp. japonica (Rice), this protein is Cyclin-C1-1.